Consider the following 267-residue polypeptide: Thiamine thiazole synthase (267 aa).

Residues serine 41, 60–61 (ER), glycine 68, valine 132, and 160–162 (HVD) each bind NAD(+). 2 residues coordinate Fe cation: aspartate 162 and histidine 177. Position 227 (methionine 227) interacts with NAD(+). A glycine-binding site is contributed by arginine 237.

Belongs to the THI4 family. Homooctamer; tetramer of dimers. Fe(2+) is required as a cofactor.

It carries out the reaction hydrogen sulfide + glycine + NAD(+) = ADP-5-ethyl-4-methylthiazole-2-carboxylate + nicotinamide + 3 H2O + H(+). Its pathway is cofactor biosynthesis; thiamine diphosphate biosynthesis. Its function is as follows. Involved in the biosynthesis of the thiazole moiety of thiamine. Catalyzes the conversion of NAD and glycine to adenosine diphosphate 5-(2-hydroxyethyl)-4-methylthiazole-2-carboxylate (ADT), an adenylated thiazole intermediate, using free sulfide as a source of sulfur. This chain is Thiamine thiazole synthase, found in Saccharolobus islandicus (strain L.S.2.15 / Lassen #1) (Sulfolobus islandicus).